A 358-amino-acid chain; its full sequence is Histidinol-phosphate aminotransferase (358 aa).

K218 carries the post-translational modification N6-(pyridoxal phosphate)lysine.

This sequence belongs to the class-II pyridoxal-phosphate-dependent aminotransferase family. Histidinol-phosphate aminotransferase subfamily. In terms of assembly, homodimer. Pyridoxal 5'-phosphate serves as cofactor.

It carries out the reaction L-histidinol phosphate + 2-oxoglutarate = 3-(imidazol-4-yl)-2-oxopropyl phosphate + L-glutamate. Its pathway is amino-acid biosynthesis; L-histidine biosynthesis; L-histidine from 5-phospho-alpha-D-ribose 1-diphosphate: step 7/9. The chain is Histidinol-phosphate aminotransferase from Dehalococcoides mccartyi (strain ATCC BAA-2266 / KCTC 15142 / 195) (Dehalococcoides ethenogenes (strain 195)).